The primary structure comprises 219 residues: Orotate phosphoribosyltransferase (219 aa).

Lys-26 contributes to the 5-phospho-alpha-D-ribose 1-diphosphate binding site. 34–35 (FF) provides a ligand contact to orotate. Residues 72 to 73 (YK), Arg-102, Lys-103, Lys-106, His-108, and 128 to 136 (DDVITAGTA) contribute to the 5-phospho-alpha-D-ribose 1-diphosphate site. Residues Thr-132 and Arg-160 each contribute to the orotate site.

This sequence belongs to the purine/pyrimidine phosphoribosyltransferase family. PyrE subfamily. In terms of assembly, homodimer.

It catalyses the reaction orotidine 5'-phosphate + diphosphate = orotate + 5-phospho-alpha-D-ribose 1-diphosphate. The protein operates within pyrimidine metabolism; UMP biosynthesis via de novo pathway; UMP from orotate: step 1/2. Its function is as follows. Catalyzes the transfer of a ribosyl phosphate group from 5-phosphoribose 1-diphosphate to orotate, leading to the formation of orotidine monophosphate (OMP). This chain is Orotate phosphoribosyltransferase (URA5), found in Yarrowia lipolytica (strain CLIB 122 / E 150) (Yeast).